Consider the following 129-residue polypeptide: Large ribosomal subunit protein bL12 (129 aa).

It belongs to the bacterial ribosomal protein bL12 family. In terms of assembly, homodimer. Part of the ribosomal stalk of the 50S ribosomal subunit. Forms a multimeric L10(L12)X complex, where L10 forms an elongated spine to which 2 to 4 L12 dimers bind in a sequential fashion. Binds GTP-bound translation factors.

Forms part of the ribosomal stalk which helps the ribosome interact with GTP-bound translation factors. Is thus essential for accurate translation. This Pseudothermotoga lettingae (strain ATCC BAA-301 / DSM 14385 / NBRC 107922 / TMO) (Thermotoga lettingae) protein is Large ribosomal subunit protein bL12.